The primary structure comprises 414 residues: Seminal vesicle secretory protein 2 (414 aa).

The signal sequence occupies residues Met1–Gly22. Pyrrolidone carboxylic acid is present on Gln23. A run of 13 repeats spans residues Glu108–Ser120, Gly127–Ser139, Glu140–Ser152, Gly153–Ser165, Gly166–Ser178, Gly179–Ser191, Gly192–Ser204, Glu205–Gln217, Tyr224–Leu236, Glu237–Gln249, Tyr257–Leu269, Asp275–Gln287, and Ser299–Leu311. The segment at Glu108–Leu311 is 13 X 13 AA tandem repeats. Disordered regions lie at residues Lys170–Lys228, Ala240–Gln294, and Gly306–Glu369. Residues Ala240–Gln259 show a composition bias toward polar residues. Residues Gln277 to Gln294 are compositionally biased toward low complexity. Polar residues-rich tracts occupy residues Gly306–Lys321 and Ser342–Met351. Positions Ser358–Glu369 are enriched in low complexity.

Post-translationally, the repeating unit appears to be involved in the formation of the copulatory plug via a transglutaminase reaction cross-linking glutamine and lysine residues.

In terms of biological role, the rat seminal vesicle contains six major androgen-dependent secretory proteins referred to as SVS I-VI. The SVS I-III proteins appear to be components of the rat copulatory plug, with the SVS II protein being the major component. The sequence is that of Seminal vesicle secretory protein 2 (Svs2) from Rattus norvegicus (Rat).